A 382-amino-acid chain; its full sequence is Mannosyl phosphorylinositol ceramide synthase SUR1 (382 aa).

Residues 1-6 (MRKELK) lie on the Cytoplasmic side of the membrane. A helical transmembrane segment spans residues 7 to 27 (YLICFNILLLLSIIYYTFDLL). Residues 28 to 269 (TLCIDDTVKD…KALENHILSC (242 aa)) are Extracellular-facing. Residues 270–290 (VVTGFIFGFFILYGEFTFYCW) traverse the membrane as a helical segment. At 291–382 (LCSKNFSNLT…SKYSLGNNSS (92 aa)) the chain is on the cytoplasmic side. Residue S349 is modified to Phosphoserine.

This sequence belongs to the glycosyltransferase 32 family. In terms of assembly, heterodimer of SUR1 and CSG2.

The protein resides in the membrane. It carries out the reaction a 1D-myo-inositol-1-phospho-N-[(R)-2-hydroxy-very-long-chain fatty acyl]-(R)-4-hydroxysphingoid base + GDP-alpha-D-mannose = an alpha-D-mannosyl-(1&lt;-&gt;6)-1D-myo-inositol-1-phospho-N-[(R)-2-hydroxy-very-long-chain fatty acyl]-(R)-4-hydroxysphingoid base + GDP + H(+). In terms of biological role, involved in the synthesis of mannosyl phosphorylinositol ceramide. Catalyzes the addition of mannosyl to phosphorylinositol ceramide. Suppressor of RVS161 mutation. This Saccharomyces cerevisiae (strain ATCC 204508 / S288c) (Baker's yeast) protein is Mannosyl phosphorylinositol ceramide synthase SUR1.